The primary structure comprises 911 residues: MQQQHLFRLNILCLSLMTALPAYAENVQAGQAQEKQLDTIQVKAKKQKTRRDNEVTGLGKLVKTADTLSKEQVLDIRDLTRYDPGIAVVEQGRGASSGYSIRGMDKNRVSLTVDGLAQIQSYTAQAALGGTRTAGSSGAINEIEYENVKAVEISKGSNSVEQGSGALAGSVAFQTKTADDVIGEGRQWGIQSKTAYSGKNRGLTQSIALAGRIGGAEALLIHTGRRAGEIRAHEDAGRGVQSFNRLVPVEDSSEYAYFIVEDECEGKNYETCKSKPKKDVVGKDERQTVSTRDYTGPNRFLADPLSYESRSWLFRPGFRFENKRHYIGGILEHTQQTFDTRDMTVPAFLTKAVFDANSKQAGSLPGNGKYAGNHKYGGLFTNGENGALVGAEYGTGVFYDETHTKSRYGLEYVYTNADKDTWADYARLSYDRQGIGLDNHFQQTHCSADGSDKYCRPSADKPFSYYKSDRVIYGESHRLLQAAFKKSFDTAKIRHNLSVNLGFDRFDSNLRHQDYYYQHANRAYSSKTPPKTANPNGDKSKPYWVSIGGGNVVTGQICLFGNNTYTDCTPRSINGKSYYAAVRDNVRLGRWADVGAGLRYDYRSTHSDDGSVSTGTHRTLSWNAGIVLKPADWLDLTYRTSTGFRLPSFAEMYGWRSGVQSKAVKIDPEKSFNKEAGIVFKGDFGNLEASWFNNAYRDLIVRGYEAQIKNGKEEAKGDPAYLNAQSARITGINILGKIDWNGVWDKLPEGWYSTFAYNRVHVRDIKKRADRTDIQSHLFDAIQPSRYVVGLGYDQPEGKWGVNGMLTYSKAKEITELLGSRALLNGNSRNTKATARRTRPWYIVDVSGYYTIKKHFTLRAGVYNLLNYRYVTWENVRQTAGGAVNQHKNVGVYNRYAAPGRNYTFSLEMKF.

The first 24 residues, 1 to 24, serve as a signal peptide directing secretion; the sequence is MQQQHLFRLNILCLSLMTALPAYA. A TonB box motif is present at residues 38–45; it reads DTIQVKAK. Positions 51–176 constitute a TBDR plug domain; that stretch reads RDNEVTGLGK…LAGSVAFQTK (126 aa). The region spanning 187-911 is the TBDR beta-barrel domain; that stretch reads QWGIQSKTAY…NYTFSLEMKF (725 aa). The TonB C-terminal box motif lies at 894-911; sequence NRYAAPGRNYTFSLEMKF.

It belongs to the TonB-dependent receptor family. In terms of assembly, binds both human apo- and holo-transferrin (TF), via the TF C-terminus. Forms a large complex with TF and TbpB.

The protein localises to the cell outer membrane. Neisseria acquires iron by extracting it from serum transferrin (TF) in its human host. Acts as a TF receptor and is required for TF utilization. Binds both apo- and holo-TF, via the TF C-terminus. The protein is Transferrin-binding protein A of Neisseria meningitidis serogroup B.